A 629-amino-acid chain; its full sequence is tRNA uridine 5-carboxymethylaminomethyl modification enzyme MnmG (629 aa).

Residues Gly13–Gly18, Val125, and Ser180 each bind FAD. Residue Gly273–Phe287 coordinates NAD(+). Gln370 provides a ligand contact to FAD.

It belongs to the MnmG family. Homodimer. Heterotetramer of two MnmE and two MnmG subunits. It depends on FAD as a cofactor.

The protein resides in the cytoplasm. Its function is as follows. NAD-binding protein involved in the addition of a carboxymethylaminomethyl (cmnm) group at the wobble position (U34) of certain tRNAs, forming tRNA-cmnm(5)s(2)U34. The sequence is that of tRNA uridine 5-carboxymethylaminomethyl modification enzyme MnmG from Klebsiella pneumoniae subsp. pneumoniae (strain ATCC 700721 / MGH 78578).